The primary structure comprises 266 residues: Tryptophan synthase alpha chain (266 aa).

Active-site proton acceptor residues include E49 and D60.

This sequence belongs to the TrpA family. Tetramer of two alpha and two beta chains.

It catalyses the reaction (1S,2R)-1-C-(indol-3-yl)glycerol 3-phosphate + L-serine = D-glyceraldehyde 3-phosphate + L-tryptophan + H2O. The protein operates within amino-acid biosynthesis; L-tryptophan biosynthesis; L-tryptophan from chorismate: step 5/5. Functionally, the alpha subunit is responsible for the aldol cleavage of indoleglycerol phosphate to indole and glyceraldehyde 3-phosphate. This Thioalkalivibrio sulfidiphilus (strain HL-EbGR7) protein is Tryptophan synthase alpha chain.